The primary structure comprises 56 residues: Potassium channel toxin alpha-KTx 9.1 (56 aa).

The first 28 residues, 1-28 (MSRLFTLVLIVLAMNVMMAIISDPVVEA), serve as a signal peptide directing secretion. 3 disulfide bridges follow: cysteine 31/cysteine 47, cysteine 34/cysteine 52, and cysteine 38/cysteine 54.

In terms of tissue distribution, expressed by the venom gland.

Its subcellular location is the secreted. Functionally, blocks small conductance calcium-activated potassium channels (KCNN, SK). Weakly inhibits the Kv7.1/KCNQ1 channel (10 uM of the toxin inhibits currents by 23.3%). Low toxicity by intracerebroventricular injection into mice. The protein is Potassium channel toxin alpha-KTx 9.1 of Olivierus martensii (Manchurian scorpion).